Consider the following 590-residue polypeptide: Ankyrin repeat domain-containing protein 13A (590 aa).

2 ANK repeats span residues 40–69 (RGRT…DVTK) and 73–102 (QGWT…YHNT). At Ser-205 the chain carries Phosphoserine. 4 UIM domains span residues 483–502 (EDYE…SSRS), 519–538 (TYDA…STEG), 549–568 (RFDN…LEEW), and 574–590 (EEEA…LTDK). Residue Ser-586 is modified to Phosphoserine.

In terms of assembly, interacts (via the UIM 3 and 4 repeats) with EGFR (ubiquitinated); the interaction is direct, inhibited by ANKRD13A monoubiquitination and may regulate EGFR internalization. Post-translationally, monoubiquitinated, inhibits interaction with ubiquitinated EGFR.

It is found in the cell membrane. It localises to the late endosome. In terms of biological role, ubiquitin-binding protein that specifically recognizes and binds 'Lys-63'-linked ubiquitin. Does not bind 'Lys-48'-linked ubiquitin. Positively regulates the internalization of ligand-activated EGFR by binding to the Ub moiety of ubiquitinated EGFR at the cell membrane. The polypeptide is Ankyrin repeat domain-containing protein 13A (ANKRD13A) (Homo sapiens (Human)).